We begin with the raw amino-acid sequence, 261 residues long: tRNA pseudouridine synthase A (261 aa).

Catalysis depends on aspartate 51, which acts as the Nucleophile. Tyrosine 109 contributes to the substrate binding site.

This sequence belongs to the tRNA pseudouridine synthase TruA family. In terms of assembly, homodimer.

The enzyme catalyses uridine(38/39/40) in tRNA = pseudouridine(38/39/40) in tRNA. Functionally, formation of pseudouridine at positions 38, 39 and 40 in the anticodon stem and loop of transfer RNAs. In Shewanella sp. (strain ANA-3), this protein is tRNA pseudouridine synthase A.